The chain runs to 256 residues: Hydroxyethylthiazole kinase (256 aa).

Met38 serves as a coordination point for substrate. The ATP site is built by Arg114 and Thr159. Gly186 is a binding site for substrate.

This sequence belongs to the Thz kinase family. Requires Mg(2+) as cofactor.

It carries out the reaction 5-(2-hydroxyethyl)-4-methylthiazole + ATP = 4-methyl-5-(2-phosphooxyethyl)-thiazole + ADP + H(+). The protein operates within cofactor biosynthesis; thiamine diphosphate biosynthesis; 4-methyl-5-(2-phosphoethyl)-thiazole from 5-(2-hydroxyethyl)-4-methylthiazole: step 1/1. Functionally, catalyzes the phosphorylation of the hydroxyl group of 4-methyl-5-beta-hydroxyethylthiazole (THZ). In Streptococcus agalactiae serotype III (strain NEM316), this protein is Hydroxyethylthiazole kinase.